The sequence spans 439 residues: Vacuolar zinc transporter COT1 (439 aa).

Residues 1–9 (MKLGSKQVK) lie on the Cytoplasmic side of the membrane. The helical transmembrane segment at 10 to 30 (IISLLLLDTVFFGIEITTGYL) threads the bilayer. Topologically, residues 31–33 (SHS) are vacuolar. A helical membrane pass occupies residues 34–54 (LALIADSFHMLNDIISLVVAL). The Cytoplasmic portion of the chain corresponds to 55-76 (WAVNVAKNRNPDSTYTYGWKRA). The chain crosses the membrane as a helical span at residues 77 to 97 (EILGALINAVFLIALCVSILI). Residues 98–113 (EALQRIIAPPVIENPK) are Vacuolar-facing. The helical transmembrane segment at 114–134 (FVLYVGVAGLISNTVGLFLFH) threads the bilayer. Residues 135-244 (DNDQEHGHGH…RKRSLNMHGV (110 aa)) are Cytoplasmic-facing. Short sequence motifs (histidine repeat) lie at residues 140 to 144 (HGHGH), 165 to 169 (HTHAH), and 219 to 223 (SSHTI). Polar residues predominate over residues 207-230 (PENASKTPSYSTSSHTIASGGNYT). Residues 207–231 (PENASKTPSYSTSSHTIASGGNYTE) form a disordered region. A Phosphoserine modification is found at S225. The chain crosses the membrane as a helical span at residues 245–265 (FLHVLGDALGNIGVMLSAFFI). Topologically, residues 266–274 (WKTDYSWKY) are vacuolar. The helical transmembrane segment at 275–295 (YTDPLVSLIITGIIFSSALPL) threads the bilayer. Over 296 to 439 (SCKASKILLQ…CNTADCLEDH (144 aa)) the chain is Cytoplasmic. K301 is covalently cross-linked (Glycyl lysine isopeptide (Lys-Gly) (interchain with G-Cter in ubiquitin)). The segment covering 388 to 402 (TSTERAGDSQGDHLQ) has biased composition (basic and acidic residues). A disordered region spans residues 388-408 (TSTERAGDSQGDHLQNDPLSL).

Belongs to the cation diffusion facilitator (CDF) transporter (TC 2.A.4) family. SLC30A subfamily.

It is found in the vacuole membrane. It carries out the reaction Zn(2+)(in) = Zn(2+)(out). In terms of biological role, vacuolar transporter that regulates zinc homeostasis by mediating zinc transport and storage into the vacuole. Plays a role in resistance to zinc shock resulting from sudden influx of zinc into cytoplasm. May also participate in the regulation of cobalt levels under normal physiological conditions and may be important in the supply of metal that is required for metalloenzyme or cofactor synthesis. Involved in the resistance to cobalt and rhodium ions. This Saccharomyces cerevisiae (strain ATCC 204508 / S288c) (Baker's yeast) protein is Vacuolar zinc transporter COT1.